Here is a 410-residue protein sequence, read N- to C-terminus: Multifunctional CCA protein (410 aa).

The ATP site is built by glycine 8 and arginine 11. CTP is bound by residues glycine 8 and arginine 11. Mg(2+)-binding residues include aspartate 21 and aspartate 23. 3 residues coordinate ATP: arginine 91, arginine 138, and arginine 141. CTP is bound by residues arginine 91, arginine 138, and arginine 141. The region spanning threonine 229–aspartate 347 is the HD domain.

This sequence belongs to the tRNA nucleotidyltransferase/poly(A) polymerase family. Bacterial CCA-adding enzyme type 1 subfamily. As to quaternary structure, monomer. Can also form homodimers and oligomers. The cofactor is Mg(2+). It depends on Ni(2+) as a cofactor.

It carries out the reaction a tRNA precursor + 2 CTP + ATP = a tRNA with a 3' CCA end + 3 diphosphate. The enzyme catalyses a tRNA with a 3' CCA end + 2 CTP + ATP = a tRNA with a 3' CCACCA end + 3 diphosphate. Catalyzes the addition and repair of the essential 3'-terminal CCA sequence in tRNAs without using a nucleic acid template. Adds these three nucleotides in the order of C, C, and A to the tRNA nucleotide-73, using CTP and ATP as substrates and producing inorganic pyrophosphate. tRNA 3'-terminal CCA addition is required both for tRNA processing and repair. Also involved in tRNA surveillance by mediating tandem CCA addition to generate a CCACCA at the 3' terminus of unstable tRNAs. While stable tRNAs receive only 3'-terminal CCA, unstable tRNAs are marked with CCACCA and rapidly degraded. The protein is Multifunctional CCA protein of Xanthomonas oryzae pv. oryzae (strain MAFF 311018).